A 601-amino-acid chain; its full sequence is Urocanate hydratase (601 aa).

NAD(+)-binding positions include 63–64 (GG) and Gln141. The interval 172–201 (SDRPSALLKQGLSPEGTAPGSGRSSAQVPG) is insert. The disordered stretch occupies residues 179–200 (LKQGLSPEGTAPGSGRSSAQVP). NAD(+)-binding positions include 216 to 218 (GMG), Glu236, 282 to 283 (NA), 307 to 311 (QTSAH), 317 to 318 (YL), and Tyr368. Cys456 is a catalytic residue. Gly538 is an NAD(+) binding site.

Belongs to the urocanase family. It depends on NAD(+) as a cofactor.

Its subcellular location is the cytoplasm. The catalysed reaction is 4-imidazolone-5-propanoate = trans-urocanate + H2O. It functions in the pathway amino-acid degradation; L-histidine degradation into L-glutamate; N-formimidoyl-L-glutamate from L-histidine: step 2/3. Catalyzes the conversion of urocanate to 4-imidazolone-5-propionate. In Ralstonia nicotianae (strain ATCC BAA-1114 / GMI1000) (Ralstonia solanacearum), this protein is Urocanate hydratase.